The primary structure comprises 252 residues: Intraflagellar transport associated protein 2 (252 aa).

GTP is bound by residues 35 to 42 (GPPKAGKT) and 118 to 125 (WDVSGDKK).

Belongs to the small GTPase superfamily. Rab family. In terms of assembly, component of the IFT complex B composed of at least che-2, che-13, dyf-1, dyf-3, dyf-6, dyf-11, dyf-13, ift-20, ift-74, ift-81, ifta-2, osm-1, osm-5 and osm-6. In terms of tissue distribution, ciliated sensory neurons.

It localises to the cytoplasm. Its subcellular location is the cytoskeleton. It is found in the cilium axoneme. Its function is as follows. Component of the intraflagellar transport (IFT) complex B required for transport of proteins in the motile cilium. May be required for ciliary entrance and transport of specific ciliary cargo proteins such as che-3 which are related to motility. Regulates specific signaling activities in the cilia, such as the daf-2/insulin receptor-like transduction pathway. In Caenorhabditis elegans, this protein is Intraflagellar transport associated protein 2.